We begin with the raw amino-acid sequence, 337 residues long: DNA-directed RNA polymerase subunit alpha (337 aa).

Positions 1 to 233 are alpha N-terminal domain (alpha-NTD); it reads MVREKVKVST…NLFIPFLHVE (233 aa). The segment at 267–337 is alpha C-terminal domain (alpha-CTD); the sequence is LAFQYIFIDQ…IEKAFQKKID (71 aa).

Belongs to the RNA polymerase alpha chain family. In plastids the minimal PEP RNA polymerase catalytic core is composed of four subunits: alpha, beta, beta', and beta''. When a (nuclear-encoded) sigma factor is associated with the core the holoenzyme is formed, which can initiate transcription.

The protein localises to the plastid. The protein resides in the chloroplast. The enzyme catalyses RNA(n) + a ribonucleoside 5'-triphosphate = RNA(n+1) + diphosphate. Its function is as follows. DNA-dependent RNA polymerase catalyzes the transcription of DNA into RNA using the four ribonucleoside triphosphates as substrates. The polypeptide is DNA-directed RNA polymerase subunit alpha (Arabis hirsuta (Hairy rock-cress)).